Here is a 635-residue protein sequence, read N- to C-terminus: MAGUK p55 subfamily member 4 (635 aa).

The segment covering 1 to 16 has biased composition (basic and acidic residues); the sequence is MRQSDRGAELTNEDRA. The interval 1-23 is disordered; the sequence is MRQSDRGAELTNEDRALPTPPDP. L27 domains are found at residues 23-79 and 86-136; these read PENG…EKKL and AQIL…FEPL. The 82-residue stretch at 153–234 folds into the PDZ domain; it reads IVCLVKNQQP…TIMFKVIPVS (82 aa). Positions 241–311 constitute an SH3 domain; it reads QKMVYVRAMI…PSNHLLKRKQ (71 aa). The Guanylate kinase-like domain occupies 426–615; it reads HRLIVLVGPS…ACGQLLSAIQ (190 aa). Positions 567 to 622 form a coiled coil; sequence VDMKFKDEDLQEMEELAQKMESQFGQFFDHVIVNDNLQDACGQLLSAIQKAQEELQ.

Belongs to the MAGUK family. In terms of assembly, may interact with GRIA2. Interacts with MPDZ. Forms a complex with CRB1 and PALS1. Interacts with FASLG. Detected in the retina (at protein level). Highly enriched in the retina where it is mainly expressed by rod photoreceptors; detected in the inner segment of the photoreceptor layer and in the outer nuclear layer. Also detected at much lower levels in pineal gland, cerebellum, cortex, hippocampus, olfactory bulb, heart, liver and spleen. Expressed in the CA1-CA3 regions of pyramidal cell layers and in the granule cell layer of dentate gyrus in the hippocampus. In the cerebellum, expressed in Purkinje cells and throughout the granule cell layer. In the olfactory bulb, expressed in mitral cells.

The protein localises to the cytoplasm. In terms of biological role, may play a role in retinal photoreceptors development. In Mus musculus (Mouse), this protein is MAGUK p55 subfamily member 4 (Mpp4).